The chain runs to 1437 residues: FYVE and coiled-coil domain-containing protein 1 (1437 aa).

Ala-2 carries the post-translational modification N-acetylalanine. Positions 4–30 (SSTETQLQRIIRDLQDAATELSHEFKE) form a coiled coil. The region spanning 36–169 (TDDSTSLHKF…VQFDLAPRGY (134 aa)) is the RUN domain. The residue at position 196 (Ser-196) is a Phosphoserine. Coiled-coil stretches lie at residues 223-270 (SLNN…VSRQ), 305-846 (SQAT…SEGA), and 873-1110 (ALTA…KDAL). Thr-372 carries the phosphothreonine modification. At Ser-837 the chain carries Phosphoserine. An FYVE-type zinc finger spans residues 1132–1190 (DMEVNHCHDCKREFSWIVRRHHCRICGRIFCYYCCNNYVVTKPSGKKERCCRACFQKFG). Residues Cys-1138, Cys-1141, Cys-1154, Cys-1157, Cys-1162, Cys-1165, Cys-1182, and Cys-1185 each contribute to the Zn(2+) site. Disordered regions lie at residues 1191 to 1227 (EGSG…SQGI) and 1253 to 1289 (SGSS…TEDV). Over residues 1194 to 1206 (GSNDSSGSGTSQG) the composition is skewed to low complexity. 2 stretches are compositionally biased toward polar residues: residues 1218–1227 (SPQSIGSQGI) and 1253–1283 (SGSS…SLTP). Residues 1296–1425 (EICLLKSGEL…SKKVLYHLTV (130 aa)) enclose the GOLD domain.

In terms of assembly, can form homodimers. Interacts (via C-terminus) with MAP1LC3B. Interacts with RAB7A; the interaction with RAB7A induces FYCO1 recruitment to late endosomal/lysosomal compartments. Expressed in heart and testis. Expressed in the eye lens.

It is found in the cytoplasmic vesicle. It localises to the autophagosome. The protein localises to the endosome. The protein resides in the lysosome. May mediate microtubule plus end-directed vesicle transport. The chain is FYVE and coiled-coil domain-containing protein 1 (Fyco1) from Mus musculus (Mouse).